The sequence spans 1802 residues: Bromodomain and WD repeat-containing protein 3 (1802 aa).

8 WD repeats span residues 170-209 (IKMH…IWAT), 213-251 (RLLA…VWCL), 255-297 (APVA…FWQW), 307-347 (RPVK…IYYL), 353-393 (EKIA…IWQY), 400-452 (SIVL…VWNS), 456-495 (QLLH…IWDL), and 502-542 (RNYF…LFGF). A phosphoserine mark is found at Ser-693 and Ser-703. The interval 768-910 (KPSYTTQRND…PKQTRKKKGG (143 aa)) is disordered. The span at 785-795 (SLRRTQRKRQH) shows a compositional bias: basic residues. Residues 796 to 817 (TYQTRSNIEHNSQASCQNSGVQ) are compositionally biased toward polar residues. Acidic residues predominate over residues 818 to 829 (EDSDSSSEEDET). Over residues 846-859 (SESSSSDSSSEYSD) the composition is skewed to low complexity. Phosphoserine occurs at positions 885 and 886. A compositionally biased stretch (basic and acidic residues) spans 889–898 (ENLKSLEERQ). The segment covering 899–909 (KKPKQTRKKKG) has biased composition (basic residues). One can recognise a Bromo 1 domain in the interval 1138–1245 (WGAHSRDEEC…DVLLRFIGDQ (108 aa)). 4 disordered regions span residues 1262-1292 (RNST…VKCR), 1326-1361 (RQPA…LSED), 1438-1500 (IQSQ…SPVS), and 1520-1725 (SSSS…RAKR). Residues 1266-1278 (DAEEDTEIVDLDS) are compositionally biased toward acidic residues. The Bromo 2 domain maps to 1300-1430 (CNPDAWKKQC…ALFESHIKNI (131 aa)). Residues 1441–1453 (QKRRRPRYRKRLR) are compositionally biased toward basic residues. Residues 1454–1468 (SSSSSLSSSGAPSPK) show a composition bias toward low complexity. The span at 1479 to 1499 (KNDQNTSVSHARTSSPFSSPV) shows a compositional bias: polar residues. Over residues 1520–1533 (SSSSFGGYSRSGNS) the composition is skewed to low complexity. Residues Ser-1577 and Ser-1579 each carry the phosphoserine modification. Residues 1587-1600 (GEDKEKKETKEKSH) show a composition bias toward basic and acidic residues. The segment covering 1601–1626 (LSTSESGELGSSLSSESTCGSDSDSE) has biased composition (low complexity). Over residues 1627-1643 (STSRTDQDYVDGDHDYS) the composition is skewed to basic and acidic residues. Composition is skewed to basic residues over residues 1649 to 1666 (RPKR…RNWK) and 1684 to 1697 (RGGR…RGSR). Ser-1763 is modified (phosphoserine).

As to expression, found in most adult tissues. Down-regulated in a majority of the B-CLL cases examined.

In terms of biological role, plays a role in the regulation of cell morphology and cytoskeletal organization. Required in the control of cell shape. The protein is Bromodomain and WD repeat-containing protein 3 (BRWD3) of Homo sapiens (Human).